We begin with the raw amino-acid sequence, 846 residues long: Exonuclease 1 (846 aa).

Positions 1–99 (MGIQGLLQFI…RSRRERRQAN (99 aa)) are N-domain. D30, D78, E150, D152, D171, D173, D225, and D270 together coordinate Mg(2+). The tract at residues 129–387 (MAHKVIKAAR…RPESGTVSDA (259 aa)) is interaction with MSH3. Residues 138–229 (RSQGVDCLVA…ILSGCDYLSS (92 aa)) are I-domain. The interval 372 to 396 (HRNYSPRPESGTVSDAPQLKENPST) is disordered. A Phosphoserine modification is found at S376. Residues 382-396 (GTVSDAPQLKENPST) show a composition bias toward polar residues. The tract at residues 388 to 490 (PQLKENPSTV…NKFATFLQRK (103 aa)) is interaction with MLH1. A Nuclear localization signal motif is present at residues 418 to 421 (KRPR). Phosphoserine is present on residues S422 and S454. K482 carries the N6-acetyllysine modification. T581 bears the Phosphothreonine mark. Phosphoserine is present on residues S598 and S610. Positions 600–846 (PTLGTLRSCF…CGRVQRAIFQ (247 aa)) are interaction with MSH2. Positions 618–781 (FSRTPSPSPS…SIQKRKHHNA (164 aa)) are disordered. 2 stretches are compositionally biased toward polar residues: residues 620–631 (RTPSPSPSTALQ) and 639–654 (SPTS…VSQL). Position 621 is a phosphothreonine (T621). Phosphoserine occurs at positions 623, 639, 660, and 674. Positions 655 to 671 (KSEESSDDESHPLREEA) are enriched in basic and acidic residues. 3 stretches are compositionally biased toward polar residues: residues 672–689 (CSSQ…SSNA), 713–722 (DSQSDQTSKL), and 743–754 (KSSSADSLSTTK). At S714 the chain carries Phosphoserine; by ATR. S746 is subject to Phosphoserine. Positions 787 to 846 (LQIKLNELWKNFGFKKDSEKLPPCKKPLSPVRDNIQLTPEAEEDIFNKPECGRVQRAIFQ) are interaction with MLH1.

It belongs to the XPG/RAD2 endonuclease family. EXO1 subfamily. As to quaternary structure, interacts with the MLH1-PMS2 heterodimer via MLH1. Interacts with MSH3. Interacts with the MSH2-MSH6 heterodimer via MSH2, and this interaction may increase the processivity of the 5'-&gt;3' exonuclease activity. Interacts with PCNA, and this interaction may both stimulate the cryptic 3'-&gt;5' exonuclease activity and suppress the 5'-&gt;3' exonuclease activity. Interacts with WRN, and this interaction stimulates both the 5'-&gt;3' exonuclease activity and cleavage of 5'-overhanging flap structures. Interacts with RECQL/RECQ1, and this interaction stimulates cleavage of 5'-overhanging flap structures. Interacts with DNA helicase ZGRF1; the interaction is increased following DNA damage induction. Mg(2+) serves as cofactor. In terms of processing, phosphorylated upon DNA damage and in response to agents stalling DNA replication, probably by ATM or ATR. Phosphorylation at Ser-454, Thr-621 and Ser-714 is induced upon DNA-damage caused by treatment with hydroxyurea (HU) but not upon IR treatment. The HU-induced EXO1 triple phosphorylation facilitates destabilization/degradation of the protein. As to expression, highly expressed in bone marrow, testis and thymus. Expressed at lower levels in colon, lymph nodes, ovary, placenta, prostate, small intestine, spleen and stomach.

Its subcellular location is the nucleus. In terms of biological role, 5'-&gt;3' double-stranded DNA exonuclease which may also possess a cryptic 3'-&gt;5' double-stranded DNA exonuclease activity. Functions in DNA mismatch repair (MMR) to excise mismatch-containing DNA tracts directed by strand breaks located either 5' or 3' to the mismatch. Also exhibits endonuclease activity against 5'-overhanging flap structures similar to those generated by displacement synthesis when DNA polymerase encounters the 5'-end of a downstream Okazaki fragment. Required for somatic hypermutation (SHM) and class switch recombination (CSR) of immunoglobulin genes. Essential for male and female meiosis. The sequence is that of Exonuclease 1 (EXO1) from Homo sapiens (Human).